We begin with the raw amino-acid sequence, 525 residues long: Glutamyl-tRNA(Gln) amidotransferase subunit A, mitochondrial (525 aa).

Residues Lys76 and Ser168 each act as charge relay system in the active site. Residue Ser192 is the Acyl-ester intermediate of the active site.

Belongs to the amidase family. GatA subfamily. Subunit of the heterotrimeric GatCAB amidotransferase (AdT) complex, composed of A (QRSL1), B (GATB) and C (GATC) subunits.

Its subcellular location is the mitochondrion. The catalysed reaction is L-glutamyl-tRNA(Gln) + L-glutamine + ATP + H2O = L-glutaminyl-tRNA(Gln) + L-glutamate + ADP + phosphate + H(+). Functionally, allows the formation of correctly charged Gln-tRNA(Gln) through the transamidation of misacylated Glu-tRNA(Gln) in the mitochondria. The reaction takes place in the presence of glutamine and ATP through an activated gamma-phospho-Glu-tRNA(Gln). The chain is Glutamyl-tRNA(Gln) amidotransferase subunit A, mitochondrial (Qrsl1) from Rattus norvegicus (Rat).